The sequence spans 557 residues: MSSSESSSASGGGPPDAEPSQTEQQTMPQLDTLISHLVAAKRSLSSINHVWRANEIVTTARAALEESVVVSARTGFLRRGLNNQLRLLYSVRTEVEEISLRGRSEFAAVLKDLDAADARLRRTLELLRETIVHGGFRPEGEQPRSLHDFVDERGVEELHAALKNSIDRTNGAQAQLDSSNHAFDDELLSIKEALGNYRAVAKLASSRSSSSPSSSSASNSSLPSMSSMPSMLHSLEMHAQEMANLLESLVRHFDLCVTAVKHTEGGGAAAKSITGDMHVGVNASGRIGPNIEEGINANLNAPLDPLSDSEYREMVHVLIKDATEAEDVVMEIHDRIGEMESSLENVLAQRDALRSIYNATIDVFQHLSSLASTRLPGYIAQAHDFTRVWHEENDRIAGGLDDLAHLNSFYDGFLDAYDGLIIEVARRRHVRQRVEKVLRDAKHKLDQLYEEDVNAREAFRVEKGDYLPSDIWPEVGREPMRIEFRRILGGKVKGAVSEQANDEEPTAGEREQRGGGQENHLSAVGDNTEVDEVIPELPRDLVEQVFARIQTRVKSTT.

2 disordered regions span residues 1 to 25 (MSSS…TEQQ) and 204 to 227 (ASSR…SMSS). The segment covering 205–227 (SSRSSSSPSSSSASNSSLPSMSS) has biased composition (low complexity). Coiled-coil stretches lie at residues 334–355 (DRIG…ALRS) and 428–458 (RHVR…AREA). The interval 495–532 (AVSEQANDEEPTAGEREQRGGGQENHLSAVGDNTEVDE) is disordered.

This sequence belongs to the ATG17 family.

The protein resides in the cytoplasm. Its subcellular location is the preautophagosomal structure membrane. Autophagy-specific protein that functions in response to autophagy-inducing signals as a scaffold to recruit other ATG proteins to organize pre-autophagosomal structure (PAS) formation. Modulates the timing and magnitude of the autophagy response, such as the size of the sequestering vesicles. Plays particularly a role in pexophagy and nucleophagy. This chain is Autophagy-related protein 17 (atg17), found in Aspergillus clavatus (strain ATCC 1007 / CBS 513.65 / DSM 816 / NCTC 3887 / NRRL 1 / QM 1276 / 107).